The primary structure comprises 441 residues: Ribulose bisphosphate carboxylase large chain (441 aa).

Residues N89 and T139 each coordinate substrate. K141 serves as the catalytic Proton acceptor. Position 143 (K143) interacts with substrate. Mg(2+) contacts are provided by K167, D169, and E170. N6-carboxylysine is present on K167. The active-site Proton acceptor is the H260. 3 residues coordinate substrate: R261, H293, and S345.

This sequence belongs to the RuBisCO large chain family. Type I subfamily. Heterohexadecamer of 8 large chains and 8 small chains; disulfide-linked. The disulfide link is formed within the large subunit homodimers. Mg(2+) serves as cofactor. Post-translationally, the disulfide bond which can form in the large chain dimeric partners within the hexadecamer appears to be associated with oxidative stress and protein turnover.

The protein localises to the plastid. It is found in the chloroplast. It carries out the reaction 2 (2R)-3-phosphoglycerate + 2 H(+) = D-ribulose 1,5-bisphosphate + CO2 + H2O. The enzyme catalyses D-ribulose 1,5-bisphosphate + O2 = 2-phosphoglycolate + (2R)-3-phosphoglycerate + 2 H(+). Its function is as follows. RuBisCO catalyzes two reactions: the carboxylation of D-ribulose 1,5-bisphosphate, the primary event in carbon dioxide fixation, as well as the oxidative fragmentation of the pentose substrate in the photorespiration process. Both reactions occur simultaneously and in competition at the same active site. The protein is Ribulose bisphosphate carboxylase large chain of Symphoricarpos albus (Common snowberry).